Here is a 486-residue protein sequence, read N- to C-terminus: Cardiolipin synthase A (486 aa).

Helical transmembrane passes span 3 to 23 (TFYT…IAGV) and 38 to 58 (MAWL…YLSF). 2 consecutive PLD phosphodiesterase domains span residues 219 to 246 (MDLR…VDPR) and 399 to 426 (EGGL…DMRS). Catalysis depends on residues H224, K226, D231, H404, K406, and D411.

The protein belongs to the phospholipase D family. Cardiolipin synthase subfamily. ClsA sub-subfamily.

The protein localises to the cell inner membrane. The enzyme catalyses 2 a 1,2-diacyl-sn-glycero-3-phospho-(1'-sn-glycerol) = a cardiolipin + glycerol. Its function is as follows. Catalyzes the reversible phosphatidyl group transfer from one phosphatidylglycerol molecule to another to form cardiolipin (CL) (diphosphatidylglycerol) and glycerol. This Citrobacter koseri (strain ATCC BAA-895 / CDC 4225-83 / SGSC4696) protein is Cardiolipin synthase A.